Reading from the N-terminus, the 469-residue chain is Uronate isomerase (469 aa).

It belongs to the metallo-dependent hydrolases superfamily. Uronate isomerase family.

The enzyme catalyses D-glucuronate = D-fructuronate. It catalyses the reaction aldehydo-D-galacturonate = keto-D-tagaturonate. Its pathway is carbohydrate metabolism; pentose and glucuronate interconversion. The protein is Uronate isomerase of Pectobacterium carotovorum subsp. carotovorum (strain PC1).